We begin with the raw amino-acid sequence, 132 residues long: N,N-dimethylformamidase alpha subunit (132 aa).

In terms of assembly, heterotetramer of two DmfA1 (alpha) and two DmfA2 (beta) subunits.

It carries out the reaction N,N-dimethylformamide + H2O = dimethylamine + formate. Activity is slightly inhibited by Mg(2+) and Mn(2+), and slightly increased by Cu(2+). Activity is slightly inhibited by the chelating agents 8-hydroxyquinoline, ethylenediaminetetraacetate, o-phenanthroline and 2,2'-bipyridyl. Hydrolyzes N,N-dimethylformamide, and to a lesser extent N,N-dimethylacetamide and N,N-diethylacetamide. Has no activity against the substituted amides N-methylformamide, N-ethylformamide, N-ethylformamide and N-methylacetamide or the unsubstituted amides formamide, nicotinamide, acetoamide, benzamide, acetamide and acrylamide. The polypeptide is N,N-dimethylformamidase alpha subunit (Alcaligenes sp).